Consider the following 41-residue polypeptide: Inducible serine protease inhibitor 3 (41 aa).

Functionally, inhibits trypsin and the toxin proteases PR1 and PR2 of M.anisopliae. Does not inhibit chymotrypsin, subtilisin Carlsberg, proteinase K and porcine pancreatic elastase. This chain is Inducible serine protease inhibitor 3, found in Galleria mellonella (Greater wax moth).